Here is a 154-residue protein sequence, read N- to C-terminus: 6,7-dimethyl-8-ribityllumazine synthase (154 aa).

Residues Phe-22, 56–58, and 80–82 each bind 5-amino-6-(D-ribitylamino)uracil; these read AFE and AVI. 85 to 86 serves as a coordination point for (2S)-2-hydroxy-3-oxobutyl phosphate; the sequence is ST. The active-site Proton donor is His-88. Residue Phe-113 coordinates 5-amino-6-(D-ribitylamino)uracil. Arg-127 provides a ligand contact to (2S)-2-hydroxy-3-oxobutyl phosphate.

It belongs to the DMRL synthase family.

It catalyses the reaction (2S)-2-hydroxy-3-oxobutyl phosphate + 5-amino-6-(D-ribitylamino)uracil = 6,7-dimethyl-8-(1-D-ribityl)lumazine + phosphate + 2 H2O + H(+). Its pathway is cofactor biosynthesis; riboflavin biosynthesis; riboflavin from 2-hydroxy-3-oxobutyl phosphate and 5-amino-6-(D-ribitylamino)uracil: step 1/2. In terms of biological role, catalyzes the formation of 6,7-dimethyl-8-ribityllumazine by condensation of 5-amino-6-(D-ribitylamino)uracil with 3,4-dihydroxy-2-butanone 4-phosphate. This is the penultimate step in the biosynthesis of riboflavin. In Clostridium kluyveri (strain NBRC 12016), this protein is 6,7-dimethyl-8-ribityllumazine synthase.